The chain runs to 904 residues: Protein translocase subunit SecA (904 aa).

Residues Gln-87, 105–109 (GEGKT), and Asp-507 contribute to the ATP site. The disordered stretch occupies residues 865–887 (GEGAEAAGQQPADAGPKIGRNDP). Low complexity predominate over residues 868–880 (AEAAGQQPADAGP). Positions 888, 890, 899, and 900 each coordinate Zn(2+).

The protein belongs to the SecA family. As to quaternary structure, monomer and homodimer. Part of the essential Sec protein translocation apparatus which comprises SecA, SecYEG and auxiliary proteins SecDF-YajC and YidC. Requires Zn(2+) as cofactor.

Its subcellular location is the cell inner membrane. It localises to the cytoplasm. The catalysed reaction is ATP + H2O + cellular proteinSide 1 = ADP + phosphate + cellular proteinSide 2.. Its function is as follows. Part of the Sec protein translocase complex. Interacts with the SecYEG preprotein conducting channel. Has a central role in coupling the hydrolysis of ATP to the transfer of proteins into and across the cell membrane, serving both as a receptor for the preprotein-SecB complex and as an ATP-driven molecular motor driving the stepwise translocation of polypeptide chains across the membrane. This chain is Protein translocase subunit SecA, found in Dechloromonas aromatica (strain RCB).